The following is a 153-amino-acid chain: Arginine repressor (153 aa).

This sequence belongs to the ArgR family.

It is found in the cytoplasm. It functions in the pathway amino-acid biosynthesis; L-arginine biosynthesis [regulation]. Its function is as follows. Regulates arginine biosynthesis genes. In Haemophilus ducreyi (strain 35000HP / ATCC 700724), this protein is Arginine repressor.